Reading from the N-terminus, the 188-residue chain is Ribose 1,5-bisphosphate phosphokinase PhnN (188 aa).

Residue 9–16 (GPSGAGKD) coordinates ATP.

This sequence belongs to the ribose 1,5-bisphosphokinase family.

The enzyme catalyses alpha-D-ribose 1,5-bisphosphate + ATP = 5-phospho-alpha-D-ribose 1-diphosphate + ADP. The protein operates within metabolic intermediate biosynthesis; 5-phospho-alpha-D-ribose 1-diphosphate biosynthesis; 5-phospho-alpha-D-ribose 1-diphosphate from D-ribose 5-phosphate (route II): step 3/3. Functionally, catalyzes the phosphorylation of ribose 1,5-bisphosphate to 5-phospho-D-ribosyl alpha-1-diphosphate (PRPP). This Pectobacterium atrosepticum (strain SCRI 1043 / ATCC BAA-672) (Erwinia carotovora subsp. atroseptica) protein is Ribose 1,5-bisphosphate phosphokinase PhnN.